Here is a 1916-residue protein sequence, read N- to C-terminus: Diacylglycerol kinase eta (1916 aa).

The interval 1–36 (MAHIKLDTLDVVQRPGTTRRSNSNSGRSSACSSGSL) is disordered. Low complexity predominate over residues 19-36 (RRSNSNSGRSSACSSGSL). Residues 82–175 (AIIKEGFLLK…WLGSLKTATT (94 aa)) enclose the PH domain. 2 Phorbol-ester/DAG-type zinc fingers span residues 195-245 (HHHW…IANC) and 268-319 (PHQW…AVAC). In terms of domain architecture, DAGKc spans 350–486 (GNFSPLLVFV…DRWSIMVFEK (137 aa)). The segment covering 623–644 (DEINTKERRSSRSLRSSEKEAL) has biased composition (basic and acidic residues). Disordered stretches follow at residues 623–648 (DEINTKERRSSRSLRSSEKEALQSRA), 846–874 (DRGKEGTEEKKGDIEKEKSSGTDVEKEDN), 1018–1067 (TLCS…DDNP), and 1183–1214 (TSTSPTKKSGHGQDISVVVRPPTPLRGDSVKP). The SAM domain maps to 1853 to 1916 (WSVNEVVTWL…LQAIKDLSEN (64 aa)).

The protein belongs to the eukaryotic diacylglycerol kinase family.

It localises to the cytoplasm. The enzyme catalyses a 1,2-diacyl-sn-glycerol + ATP = a 1,2-diacyl-sn-glycero-3-phosphate + ADP + H(+). Phosphorylates diacylglycerol (DAG) to generate phosphatidic acid (PA). The protein is Diacylglycerol kinase eta of Drosophila ananassae (Fruit fly).